Reading from the N-terminus, the 33-residue chain is Rugosin-B (33 aa).

Cysteine 27 and cysteine 33 are disulfide-bonded.

This sequence belongs to the frog skin active peptide (FSAP) family. Brevinin subfamily. As to expression, expressed by the skin glands.

The protein localises to the secreted. Shows antibacterial activity against both Gram-negative and Gram-positive bacteria. This chain is Rugosin-B, found in Glandirana rugosa (Japanese wrinkled frog).